The chain runs to 262 residues: Acyl-[acyl-carrier-protein]--UDP-N-acetylglucosamine O-acyltransferase (262 aa).

Belongs to the transferase hexapeptide repeat family. LpxA subfamily. As to quaternary structure, homotrimer.

Its subcellular location is the cytoplasm. The catalysed reaction is a (3R)-hydroxyacyl-[ACP] + UDP-N-acetyl-alpha-D-glucosamine = a UDP-3-O-[(3R)-3-hydroxyacyl]-N-acetyl-alpha-D-glucosamine + holo-[ACP]. It participates in glycolipid biosynthesis; lipid IV(A) biosynthesis; lipid IV(A) from (3R)-3-hydroxytetradecanoyl-[acyl-carrier-protein] and UDP-N-acetyl-alpha-D-glucosamine: step 1/6. Its function is as follows. Involved in the biosynthesis of lipid A, a phosphorylated glycolipid that anchors the lipopolysaccharide to the outer membrane of the cell. This chain is Acyl-[acyl-carrier-protein]--UDP-N-acetylglucosamine O-acyltransferase, found in Campylobacter concisus (strain 13826).